The primary structure comprises 170 residues: uncharacterized protein (170 aa).

Belongs to the mimivirus L223/L227/L812 family.

This is an uncharacterized protein from Acanthamoeba polyphaga mimivirus (APMV).